A 155-amino-acid polypeptide reads, in one-letter code: U4/U6.U5 small nuclear ribonucleoprotein 27 kDa protein (155 aa).

Composition is skewed to basic residues over residues 1 to 31 (MGRS…RERS) and 39 to 59 (RRSR…RHRS). The interval 1-97 (MGRSRSRSPR…ITEEDLEGKT (97 aa)) is disordered. Phosphoserine is present on residues Ser-61 and Ser-65. The span at 66-97 (RLKERRDEEKKETKETKSKERQITEEDLEGKT) shows a compositional bias: basic and acidic residues. Residues Ser-111, Ser-114, and Ser-132 each carry the phosphoserine modification.

Belongs to the SNUT3 family. As to quaternary structure, part of a tri-snRNP complex. Post-translationally, phosphorylated in vitro by snRNP-associated protein kinase.

It localises to the nucleus. In terms of biological role, may play a role in mRNA splicing. The sequence is that of U4/U6.U5 small nuclear ribonucleoprotein 27 kDa protein (SNRNP27) from Homo sapiens (Human).